The following is a 91-amino-acid chain: Cell division topological specificity factor (91 aa).

It belongs to the MinE family.

Functionally, prevents the cell division inhibition by proteins MinC and MinD at internal division sites while permitting inhibition at polar sites. This ensures cell division at the proper site by restricting the formation of a division septum at the midpoint of the long axis of the cell. The protein is Cell division topological specificity factor of Erwinia tasmaniensis (strain DSM 17950 / CFBP 7177 / CIP 109463 / NCPPB 4357 / Et1/99).